The following is a 320-amino-acid chain: Nuclease (320 aa).

His155 acts as the Proton acceptor in catalysis. Asn187 contacts Mg(2+). N-linked (GlcNAc...) asparagine glycosylation occurs at Asn204. Residues Cys312 and Cys317 are joined by a disulfide bond.

It belongs to the DNA/RNA non-specific endonuclease family. As to quaternary structure, homodimer; as a result of non-covalent interactions and not through the disulfide linkages between the two monomers. It depends on Mg(2+) as a cofactor. The cofactor is Mn(2+). In terms of processing, glycosylated.

It localises to the secreted. In terms of biological role, this enzyme has both RNase and DNase activity. This chain is Nuclease, found in Syncephalastrum racemosum (Filamentous fungus).